The following is a 428-amino-acid chain: Serine--tRNA ligase (428 aa).

Threonine 235–glutamate 237 provides a ligand contact to L-serine. Position 266–268 (arginine 266–glutamate 268) interacts with ATP. Glutamate 289 contacts L-serine. Glutamate 353–serine 356 is a binding site for ATP. An L-serine-binding site is contributed by serine 389.

The protein belongs to the class-II aminoacyl-tRNA synthetase family. Type-1 seryl-tRNA synthetase subfamily. Homodimer. The tRNA molecule binds across the dimer.

The protein resides in the cytoplasm. The catalysed reaction is tRNA(Ser) + L-serine + ATP = L-seryl-tRNA(Ser) + AMP + diphosphate + H(+). The enzyme catalyses tRNA(Sec) + L-serine + ATP = L-seryl-tRNA(Sec) + AMP + diphosphate + H(+). It functions in the pathway aminoacyl-tRNA biosynthesis; selenocysteinyl-tRNA(Sec) biosynthesis; L-seryl-tRNA(Sec) from L-serine and tRNA(Sec): step 1/1. In terms of biological role, catalyzes the attachment of serine to tRNA(Ser). Is also able to aminoacylate tRNA(Sec) with serine, to form the misacylated tRNA L-seryl-tRNA(Sec), which will be further converted into selenocysteinyl-tRNA(Sec). The polypeptide is Serine--tRNA ligase (Shewanella sediminis (strain HAW-EB3)).